Consider the following 457-residue polypeptide: Argininosuccinate lyase (457 aa).

It belongs to the lyase 1 family. Argininosuccinate lyase subfamily.

The protein resides in the cytoplasm. It carries out the reaction 2-(N(omega)-L-arginino)succinate = fumarate + L-arginine. It functions in the pathway amino-acid biosynthesis; L-arginine biosynthesis; L-arginine from L-ornithine and carbamoyl phosphate: step 3/3. This Citrobacter koseri (strain ATCC BAA-895 / CDC 4225-83 / SGSC4696) protein is Argininosuccinate lyase.